The following is a 141-amino-acid chain: Transcription antitermination protein NusB (141 aa).

This sequence belongs to the NusB family.

Its function is as follows. Involved in transcription antitermination. Required for transcription of ribosomal RNA (rRNA) genes. Binds specifically to the boxA antiterminator sequence of the ribosomal RNA (rrn) operons. This is Transcription antitermination protein NusB from Fervidobacterium nodosum (strain ATCC 35602 / DSM 5306 / Rt17-B1).